The primary structure comprises 389 residues: F-box protein At3g19880 (389 aa).

An F-box domain is found at threonine 2–lysine 49.

The polypeptide is F-box protein At3g19880 (Arabidopsis thaliana (Mouse-ear cress)).